The primary structure comprises 41 residues: QTFVTIPGTLRDHPDNLSLAGDGFDTVIKVSCADILTMATR.

It belongs to the peroxidase family. Classical plant (class III) peroxidase subfamily. It depends on heme b as a cofactor. Ca(2+) serves as cofactor.

The protein resides in the secreted. It carries out the reaction 2 a phenolic donor + H2O2 = 2 a phenolic radical donor + 2 H2O. Its function is as follows. Removal of H(2)O(2), oxidation of toxic reductants, biosynthesis and degradation of lignin, suberization, auxin catabolism, response to environmental stresses such as wounding, pathogen attack and oxidative stress. These functions might be dependent on each isozyme/isoform in each plant tissue. The polypeptide is Peroxidase 3 (Vitis vinifera (Grape)).